The following is a 906-amino-acid chain: Microtubule-associated protein 6 (906 aa).

A calmodulin-binding region spans residues 1 to 15; the sequence is MAWPCITRACCIARF. S-palmitoyl cysteine attachment occurs at residues Cys-5, Cys-10, and Cys-11. 5 disordered regions span residues 37-56, 65-411, 441-651, 674-782, and 817-906; these read TEHP…ALAP, TQPA…RAVA, KPVK…GPVK, NKDS…TAPR, and AKDQ…EGSP. Positions 41-50 are enriched in pro residues; the sequence is GAPPQPPAPL. Residues 93–117 are compositionally biased toward low complexity; sequence AAPGRSGLGLGAASASTSGSGPADS. At Ser-98 the chain carries Phosphoserine. The mn 1 stretch occupies residues 116 to 139; that stretch reads DSVMRQDYRAWKVQRPEPSCRPRS. Over residues 119–139 the composition is skewed to basic and acidic residues; it reads MRQDYRAWKVQRPEPSCRPRS. The interval 124 to 138 is calmodulin-binding; it reads RAWKVQRPEPSCRPR. The residue at position 141 (Tyr-141) is a Phosphotyrosine. The segment covering 147 to 171 has biased composition (basic and acidic residues); the sequence is PFERETQYQKDFRAWPLPRRGDHPW. The mn 2 stretch occupies residues 151-174; sequence ETQYQKDFRAWPLPRRGDHPWIPK. The segment at 160 to 174 is calmodulin-binding; it reads AWPLPRRGDHPWIPK. Residue Ser-185 is modified to Phosphoserine. The tract at residues 187–201 is calmodulin-binding; it reads PVLGVPKRRPQSQER. The residue at position 207 (Ser-207) is a Phosphoserine. The Mc-1 repeat unit spans residues 222–267; sequence LAAGKASGVDQRDTRRKAGPAWMVTRNEGHEEKPLPPAQSQTQEGG. Positions 222–405 are 4 X approximate tandem repeat Mc; the sequence is LAAGKASGVD…HAQGTGPEGG (184 aa). 7 calmodulin-binding regions span residues 235–249, 280–294, 325–339, 375–389, 435–449, 486–500, and 513–527; these read TRRK…TRNE, DTRR…VTRS, RDTR…MVTR, RKAG…SEGH, RAWT…IKAK, RRRI…FKEC, and PKKT…RKAK. A Mc-2 repeat occupies 268–313; the sequence is PAAGKASGADQRDTRRKAGPAWMVTRSEGHEEKPLPPAQSQTQEGG. One copy of the Mc-3 repeat lies at 314 to 359; sequence PAAGKASGADQRDTRRKAGPAWMVTRTEGHEETPLPPAQSQTQEGG. A Mc-4 repeat occupies 360–405; sequence PAAGKASGADERDTRRKAGPAWMVRRSEGHEQTPAAHAQGTGPEGG. Residues 427–450 are mn 3; sequence SSSYRNEFRAWTDIKPVKPIKAKP. The span at 496 to 505 shows a compositional bias: basic and acidic residues; it reads PFKECPKVEK. Over residues 512 to 527 the composition is skewed to basic residues; the sequence is KPKKTSTSHKPPRKAK. Basic and acidic residues predominate over residues 549 to 573; it reads KPDDKEQSKEMNNKLAEAKESRVKP. 2 positions are modified to phosphoserine: Ser-632 and Ser-687. Positions 695–711 are enriched in polar residues; that stretch reads KNQSPVVPASTKDQSFP. Positions 715–742 are enriched in basic and acidic residues; sequence PRKDPGPVIPEPEKDRAPTVPERRKDQH. The residue at position 905 (Ser-905) is a Phosphoserine.

This sequence belongs to the STOP family. Interacts with calmodulin (via C-terminus); the interaction is dependent on Ca(2+). Interacts (via C-terminus) with TMEM106B (via N-terminus). Interacts with ZDHHC13 (via ANK repeats). Interacts with ZDHHC17 (via ANK repeats). Post-translationally, palmitoylated. Probably depalmitoylated by ABHD17A, ABHD17B and ABHD17C. During neuronal polarization, palmitoylation and depalmitoylation cycles regulate MAP6 shuttling between secretory vesicles and microtubules, and its polarized distribution in the axon. Isoform 1 is specifically expressed in adult brain. Isoform 2 is predominantly expressed in embryonic brain; expression persists at low levels in the adult brain. Isoform 3 is expressed at high levels in lung and at lower levels in testis, heart, muscle and kidney (at protein level). Oligodendrocytes express a major isoform of 89 kDa (O-STOP). Astrocytes also express an isoform of 60 kDa (A-STOP).

Its subcellular location is the cytoplasm. It localises to the cytoskeleton. The protein resides in the golgi apparatus. It is found in the cell projection. The protein localises to the axon. Its subcellular location is the dendrite. It localises to the cytoplasmic vesicle. The protein resides in the secretory vesicle membrane. In terms of biological role, involved in microtubule stabilization in many cell types, including neuronal cells. Specifically has microtubule cold stabilizing activity. Involved in dendrite morphogenesis and maintenance by regulating lysosomal trafficking via its interaction with TMEM106B. Regulates KIF5A-mediated axonal cargo transport. Regulates axonal growth during neuron polarization. The polypeptide is Microtubule-associated protein 6 (Map6) (Mus musculus (Mouse)).